The sequence spans 397 residues: MQFKRLSDLIARNELKGKRVFIRADLNVPQDGKGNITEDTRIRASVPAIRQALQAGAAVMVTSHLGRPVEGEFKPADTLAPIAQRLSELLGQPVALKQDWVDGVDVAPGQVVLLENCRVNKGEKKNDDVLAKKIAALCDVYVNDAFGTAHRAEATTHGIAKYATVACAGPLLAAELDALGKALHQPASPLVAIVAGSKVSTKLTILKTLADKVDNLIVGGGIANTFMLAAGLKIGKSLAEADLVGDARAIMDMMAKRGASVPIPVDVVCAKEFSPTAIATVKDVADVTDDDMILDIGPKTADILAKQISQAGTIVWNGPVGVFEFDQFANGTKTLAHAIAESSGFSVAGGGDTLAAIAKYDIADKIGYISTGGGAFLEFLEGKTLPAVEILEQRATS.

Substrate-binding positions include 25–27 (DLN), arginine 41, 64–67 (HLGR), arginine 118, and arginine 151. ATP-binding positions include lysine 202, glutamate 324, and 350–353 (GGDT).

This sequence belongs to the phosphoglycerate kinase family. In terms of assembly, monomer.

Its subcellular location is the cytoplasm. The catalysed reaction is (2R)-3-phosphoglycerate + ATP = (2R)-3-phospho-glyceroyl phosphate + ADP. Its pathway is carbohydrate degradation; glycolysis; pyruvate from D-glyceraldehyde 3-phosphate: step 2/5. The protein is Phosphoglycerate kinase of Herminiimonas arsenicoxydans.